The sequence spans 85 residues: Elicitor peptide 7 (85 aa).

Positions 1 to 62 (MEGEGRREDG…TEVVNIPRSV (62 aa)) are excised as a propeptide. The interval 66–85 (NVAARKGKQQTSSGKGGGTN) is disordered.

It belongs to the brassicaceae elicitor peptide family.

Functionally, elicitor of plant defense. The polypeptide is Elicitor peptide 7 (PEP7) (Arabidopsis thaliana (Mouse-ear cress)).